The chain runs to 205 residues: 7-methyl-GTP pyrophosphatase (205 aa).

D79 (proton acceptor) is an active-site residue.

It belongs to the Maf family. YceF subfamily. A divalent metal cation serves as cofactor.

The protein localises to the cytoplasm. It carries out the reaction N(7)-methyl-GTP + H2O = N(7)-methyl-GMP + diphosphate + H(+). Nucleoside triphosphate pyrophosphatase that hydrolyzes 7-methyl-GTP (m(7)GTP). May have a dual role in cell division arrest and in preventing the incorporation of modified nucleotides into cellular nucleic acids. This Paraburkholderia xenovorans (strain LB400) protein is 7-methyl-GTP pyrophosphatase.